The sequence spans 309 residues: Probable inactive poly [ADP-ribose] polymerase SRO5 (309 aa).

Positions 28–255 constitute a PARP catalytic domain; the sequence is CDSSSDRSFA…AFPVLIKALS (228 aa). In terms of domain architecture, RST spans 238–309; it reads KRLRSPWMAF…IKACGHKVQH (72 aa).

Interacts with dehydration-responsive DREB2 proteins and a number of transcription factors belonging to several protein families.

The protein resides in the nucleus matrix. In terms of biological role, probable inactive ADP-ribosyltransferase that may be involved in stress and developmental responses. This Arabidopsis thaliana (Mouse-ear cress) protein is Probable inactive poly [ADP-ribose] polymerase SRO5 (SRO5).